Consider the following 600-residue polypeptide: Elongation factor 4 (600 aa).

Residues 5–187 (KYIRNFSIIA…AIVNKLPPPK (183 aa)) enclose the tr-type G domain. Residues 17–22 (DHGKST) and 134–137 (NKLD) each bind GTP.

It belongs to the TRAFAC class translation factor GTPase superfamily. Classic translation factor GTPase family. LepA subfamily.

It localises to the cell inner membrane. It carries out the reaction GTP + H2O = GDP + phosphate + H(+). Required for accurate and efficient protein synthesis under certain stress conditions. May act as a fidelity factor of the translation reaction, by catalyzing a one-codon backward translocation of tRNAs on improperly translocated ribosomes. Back-translocation proceeds from a post-translocation (POST) complex to a pre-translocation (PRE) complex, thus giving elongation factor G a second chance to translocate the tRNAs correctly. Binds to ribosomes in a GTP-dependent manner. This chain is Elongation factor 4, found in Rickettsia africae (strain ESF-5).